Reading from the N-terminus, the 92-residue chain is uncharacterized protein (92 aa).

The HTH arsR-type domain occupies Met1–Glu92. A DNA-binding region (H-T-H motif) is located at residues Ile37 to Asp61.

This is an uncharacterized protein from Bacillus subtilis (strain 168).